The primary structure comprises 224 residues: Peptidyl-prolyl cis-trans isomerase FKBP3 (224 aa).

Ala-2 bears the N-acetylalanine mark. At Ser-36 the chain carries Phosphoserine. A compositionally biased stretch (basic and acidic residues) spans 89–102 (KLNEDKPKETKSEE). The tract at residues 89 to 111 (KLNEDKPKETKSEETLDEGPPKY) is disordered. Position 99 is an N6-acetyllysine (Lys-99). One can recognise a PPIase FKBP-type domain in the interval 128–224 (GDVVHCWYTG…TFEVELVDID (97 aa)). Ser-152 is subject to Phosphoserine. The residue at position 170 (Lys-170) is an N6-acetyllysine.

It belongs to the FKBP-type PPIase family.

The protein localises to the nucleus. It catalyses the reaction [protein]-peptidylproline (omega=180) = [protein]-peptidylproline (omega=0). With respect to regulation, inhibited preferentially by rapamycin over FK506. Functionally, FK506- and rapamycin-binding proteins (FKBPs) constitute a family of receptors for the two immunosuppressants which inhibit T-cell proliferation by arresting two distinct cytoplasmic signal transmission pathways. PPIases accelerate the folding of proteins. The sequence is that of Peptidyl-prolyl cis-trans isomerase FKBP3 (FKBP3) from Homo sapiens (Human).